A 239-amino-acid polypeptide reads, in one-letter code: Phosphothreonine lyase OspF (239 aa).

His104 functions as the Proton donor in the catalytic mechanism. The Proton acceptor role is filled by Lys134.

This sequence belongs to the phosphothreonine lyase family.

The protein localises to the secreted. Functionally, catalyzes the removal of the phosphate group from the phosphothreonine in the mitogen-activated protein kinases p38, phosphothreonine in the mitogen-activated protein kinases such as MAPK2/ERK2, MAPK3/ERK1, MAPK8 and MAPK14 in an irreversible reaction, thus preventing the downstream phosphorylation of histone H3. This epigenetic modification results in inhibition of the transcription of a specific subset of pro-inflammatory genes, and ultimately to a reduced immune response against the invading pathogen. The diminished immune response enhances the bacterium's ability to disseminate and multiply within the host. This chain is Phosphothreonine lyase OspF (ospF), found in Shigella boydii serotype 4 (strain Sb227).